The chain runs to 176 residues: MSSDPVPSSFEGNPQFEEETSLQKFRRRLKEEPLIPLGCAATSYALYRAYRSMKAGDSVEMNRMFRARIYAQFFTLIAVVVGGMYFKTERQQRKEFERMVEERKSQEKRDAWLRELEIRDKEDKDWRQRHAAMEAAAAEAGKKTAPHDAARSAIERSEEKSIGVLDAVKELLSRRN.

An HIG1 domain is found at Val6–Glu97. 2 consecutive transmembrane segments (helical) span residues Pro33 to Ala49 and Ile69 to Phe86. A disordered region spans residues Arg129–Glu158. Basic and acidic residues predominate over residues Ala140–Glu158.

It belongs to the RCF1 family. As to quaternary structure, associates with the respiratory chain complex III/complex IV supercomplex.

It is found in the mitochondrion membrane. Functionally, cytochrome c oxidase subunit which plays a role in assembly of respiratory supercomplexes. This is Respiratory supercomplex factor 1, mitochondrial (rcf1) from Aspergillus flavus (strain ATCC 200026 / FGSC A1120 / IAM 13836 / NRRL 3357 / JCM 12722 / SRRC 167).